A 238-amino-acid chain; its full sequence is Probable transcriptional regulatory protein SAB0618 (238 aa).

It belongs to the TACO1 family. YeeN subfamily.

The protein localises to the cytoplasm. The polypeptide is Probable transcriptional regulatory protein SAB0618 (Staphylococcus aureus (strain bovine RF122 / ET3-1)).